A 129-amino-acid chain; its full sequence is MANLNQIQKEVSEILSDQKSMKADIKAILELLGSQNPIKESLETVAAKIVNDLTKLINDCPCNKEILEALGTQPKEQLIEQPKEKGKGLNLGKYSYPNYGVGNEELGSSGNPKALTWPFKAPAGWPNQF.

Coiled coils occupy residues 1 to 31 (MANL…ILEL) and 38 to 59 (IKES…LIND). The interval 122–129 (PAGWPNQF) is capsid binding.

The protein belongs to the caulimovirus ORF III family. As to quaternary structure, homotetramer, through coiled-coil domain. Homotrimer when bound on icosehadral capsid. Interacts with capsid protein, and with movement protein.

Its subcellular location is the virion. The protein localises to the host cell junction. The protein resides in the host plasmodesma. In terms of biological role, plays a role in virus cell-to-cell and plant-to-plant transmission. Interacts with virion icosahedral capsid and movement protein, thereby facilitating virion cell-to-cell transmission through plasmodesmata opened by viral movement protein. Also interacts with aphid transmission factor, attaching the virion to aphid stylet when the animal feeds on an virus infected plant. Aphid saliva may later detach the virion, inducing release of infectious particles when the animal feeds on a new plant. The chain is Virion-associated protein from Cauliflower mosaic virus (strain Strasbourg) (CaMV).